Here is a 424-residue protein sequence, read N- to C-terminus: Putative polyketide beta-ketoacyl synthase 2 (424 aa).

The 404-residue stretch at 13-416 (SRRAVVTGLG…GSNSALVLRR (404 aa)) folds into the Ketosynthase family 3 (KS3) domain.

The protein belongs to the thiolase-like superfamily. Beta-ketoacyl-ACP synthases family.

Involved in developmentally regulated synthesis of a compound biosynthetically related to polyketide antibiotics which is essential for spore color in Streptomyces coelicolor. This Streptomyces coelicolor (strain ATCC BAA-471 / A3(2) / M145) protein is Putative polyketide beta-ketoacyl synthase 2.